A 215-amino-acid chain; its full sequence is CASP-like protein UU3 (215 aa).

At 1-44 (MATAWESEYFDKVTPGERERAVPPMVPQQTPPPVYIQPQVSRNG) the chain is on the cytoplasmic side. Residues 45–65 (IVASIVLRLLTLIFAVVALAV) traverse the membrane as a helical segment. At 66 to 93 (LASNTGSFQVSTGSATSVKTIKFTILSA) the chain is on the extracellular side. The helical transmembrane segment at 94 to 114 (FTYLFAVCGVVAVYSLLLIIV) threads the bilayer. Residues 115-128 (EMIDLAVRGFTTHT) lie on the Cytoplasmic side of the membrane. The helical transmembrane segment at 129–149 (LVAIFVFVLDQTMAYVLISAA) threads the bilayer. The Extracellular portion of the chain corresponds to 150–185 (SASANGVKVSRDESNITGYKFDISCSNLGIDDYCTK). N-linked (GlcNAc...) asparagine glycosylation occurs at Asn164. A helical membrane pass occupies residues 186-206 (ASASVAIAFIAFLFMAITAGV). Residues 207–215 (SARRLFKLP) lie on the Cytoplasmic side of the membrane.

It belongs to the Casparian strip membrane proteins (CASP) family. In terms of assembly, homodimer and heterodimers.

The protein resides in the cell membrane. This Physcomitrium patens (Spreading-leaved earth moss) protein is CASP-like protein UU3.